A 287-amino-acid polypeptide reads, in one-letter code: Probable ABC transporter extracellular-binding protein YckB (287 aa).

The first 24 residues, 1-24 (MKSFMHSKAVIFSFTMAFFLILAA), serve as a signal peptide directing secretion. Cys-25 carries N-palmitoyl cysteine lipidation. Cys-25 carries the S-diacylglycerol cysteine lipid modification.

It belongs to the bacterial solute-binding protein 3 family.

The protein resides in the cell membrane. In terms of biological role, probably part of a binding-protein-dependent transport system. In Bacillus subtilis (strain 168), this protein is Probable ABC transporter extracellular-binding protein YckB (yckB).